The sequence spans 72 residues: Large ribosomal subunit protein uL29 (72 aa).

It belongs to the universal ribosomal protein uL29 family.

This chain is Large ribosomal subunit protein uL29, found in Prochlorococcus marinus (strain MIT 9215).